Consider the following 316-residue polypeptide: Ribosomal RNA small subunit methyltransferase H (316 aa).

Residues 35-37, D55, F84, D105, and Q112 contribute to the S-adenosyl-L-methionine site; that span reads AGH.

It belongs to the methyltransferase superfamily. RsmH family.

It is found in the cytoplasm. It carries out the reaction cytidine(1402) in 16S rRNA + S-adenosyl-L-methionine = N(4)-methylcytidine(1402) in 16S rRNA + S-adenosyl-L-homocysteine + H(+). In terms of biological role, specifically methylates the N4 position of cytidine in position 1402 (C1402) of 16S rRNA. The polypeptide is Ribosomal RNA small subunit methyltransferase H (Streptococcus pneumoniae (strain 70585)).